Reading from the N-terminus, the 65-residue chain is Muscarinic toxin 3 (65 aa).

4 disulfides stabilise this stretch: Cys-3–Cys-24, Cys-17–Cys-42, Cys-46–Cys-57, and Cys-58–Cys-63.

Belongs to the three-finger toxin family. Short-chain subfamily. Aminergic toxin sub-subfamily. Expressed by the venom gland.

It localises to the secreted. Functionally, potent antagonist (IC(50)=1-10 nM) of M4 (CHRM4) muscarinic receptors, and CHRM1, ADRA1A, ADRA2A and ADRA2C adrenergic receptors. Also antagonises ADRA1B and ADRA1D adrenergic receptors with a 10-times lower affinity. This is Muscarinic toxin 3 from Dendroaspis angusticeps (Eastern green mamba).